The following is a 594-amino-acid chain: SHC-transforming protein 3 (594 aa).

The tract at residues G98–Q147 is disordered. Residues S101 to A124 show a composition bias toward low complexity. Residues L149 to G334 form the PID domain. The tract at residues D335 to T498 is CH1. Disordered stretches follow at residues P351 to A373 and G386 to I405. Residues W393–I405 show a composition bias toward polar residues. At S402 the chain carries Phosphoserine. Residues W499–V590 form the SH2 domain.

As to quaternary structure, interacts with the Trk receptors in a phosphotyrosine-dependent manner. Once activated, binds to GRB2. Interacts with activated EGF receptors. Tyrosine phosphorylated. As to expression, mainly expressed in brain. Hardly detectable in other tissues, except in pancreas. Highly expressed in the cerebral cortex, frontal and temporal lobes, occipital pole, hippocampus, caudate nucleus and amygdala. Expressed at low level in the cerebellum, medulla and spinal cord.

Signaling adapter that couples activated growth factor receptors to signaling pathway in neurons. Involved in the signal transduction pathways of neurotrophin-activated Trk receptors in cortical neurons. The chain is SHC-transforming protein 3 (SHC3) from Homo sapiens (Human).